Reading from the N-terminus, the 37-residue chain is Beta-2-microglobulin (37 aa).

Positions 11–37 (GKEDVLICHVSNFHPPDITITLLKNGE) constitute an Ig-like C1-type domain.

It belongs to the beta-2-microglobulin family. As to quaternary structure, heterodimer of an alpha chain and a beta chain. Beta-2-microglobulin is the beta-chain of major histocompatibility complex class I molecules.

It localises to the secreted. Its function is as follows. Component of the class I major histocompatibility complex (MHC). Involved in the presentation of peptide antigens to the immune system. The protein is Beta-2-microglobulin (b2m) of Oreochromis niloticus (Nile tilapia).